A 346-amino-acid polypeptide reads, in one-letter code: D-alanine--D-alanine ligase (346 aa).

In terms of domain architecture, ATP-grasp spans 133–324 (KLYAQSVGVK…IVDNLAKNIE (192 aa)). Residue 159-211 (LSFPCILKPARLGSSIGISIVKDESELKYAKDVAFEFDEDVVVEQFVSNIKEY) coordinates ATP. Mg(2+)-binding residues include aspartate 284, glutamate 296, and asparagine 298.

Belongs to the D-alanine--D-alanine ligase family. The cofactor is Mg(2+). Requires Mn(2+) as cofactor.

The protein resides in the cytoplasm. It carries out the reaction 2 D-alanine + ATP = D-alanyl-D-alanine + ADP + phosphate + H(+). It functions in the pathway cell wall biogenesis; peptidoglycan biosynthesis. Functionally, cell wall formation. In Campylobacter lari (strain RM2100 / D67 / ATCC BAA-1060), this protein is D-alanine--D-alanine ligase.